The chain runs to 430 residues: Agropine synthesis reductase (430 aa).

203 to 227 (LISGPSRGIGKAIAENLIAHGYRMS) serves as a coordination point for NAD(+). Serine 333 contributes to the substrate binding site. The Proton acceptor role is filled by tyrosine 346.

This sequence belongs to the short-chain dehydrogenases/reductases (SDR) family.

The protein operates within opine metabolism; mannopine biosynthesis. Its function is as follows. Reduces deoxy-fructosyl-glutamine to mannopine. The sequence is that of Agropine synthesis reductase (mas1) from Rhizobium rhizogenes (Agrobacterium rhizogenes).